The chain runs to 467 residues: Ribulose bisphosphate carboxylase large chain (467 aa).

Lys5 carries the N6,N6,N6-trimethyllysine modification. Substrate-binding residues include Asn114 and Thr164. The Proton acceptor role is filled by Lys166. A substrate-binding site is contributed by Lys168. Mg(2+) contacts are provided by Lys192, Asp194, and Glu195. Lys192 carries the post-translational modification N6-carboxylysine. His285 acts as the Proton acceptor in catalysis. Substrate-binding residues include Arg286, His318, and Ser370.

It belongs to the RuBisCO large chain family. Type I subfamily. Heterohexadecamer of 8 large chains and 8 small chains; disulfide-linked. The disulfide link is formed within the large subunit homodimers. The cofactor is Mg(2+). Post-translationally, the disulfide bond which can form in the large chain dimeric partners within the hexadecamer appears to be associated with oxidative stress and protein turnover.

It is found in the plastid. It localises to the chloroplast. It catalyses the reaction 2 (2R)-3-phosphoglycerate + 2 H(+) = D-ribulose 1,5-bisphosphate + CO2 + H2O. It carries out the reaction D-ribulose 1,5-bisphosphate + O2 = 2-phosphoglycolate + (2R)-3-phosphoglycerate + 2 H(+). Its function is as follows. RuBisCO catalyzes two reactions: the carboxylation of D-ribulose 1,5-bisphosphate, the primary event in carbon dioxide fixation, as well as the oxidative fragmentation of the pentose substrate in the photorespiration process. Both reactions occur simultaneously and in competition at the same active site. In Jasminum simplicifolium subsp. suavissimum (Native jasmine), this protein is Ribulose bisphosphate carboxylase large chain.